The chain runs to 469 residues: 3-isopropylmalate dehydratase large subunit (469 aa).

[4Fe-4S] cluster is bound by residues Cys-347, Cys-408, and Cys-411.

It belongs to the aconitase/IPM isomerase family. LeuC type 1 subfamily. As to quaternary structure, heterodimer of LeuC and LeuD. The cofactor is [4Fe-4S] cluster.

It catalyses the reaction (2R,3S)-3-isopropylmalate = (2S)-2-isopropylmalate. It functions in the pathway amino-acid biosynthesis; L-leucine biosynthesis; L-leucine from 3-methyl-2-oxobutanoate: step 2/4. Functionally, catalyzes the isomerization between 2-isopropylmalate and 3-isopropylmalate, via the formation of 2-isopropylmaleate. The chain is 3-isopropylmalate dehydratase large subunit from Actinobacillus succinogenes (strain ATCC 55618 / DSM 22257 / CCUG 43843 / 130Z).